Consider the following 382-residue polypeptide: Cell division cycle-associated protein 7 (382 aa).

2 disordered regions span residues 68 to 118 (PLRV…EDGM) and 151 to 217 (GRHS…EDKY). Acidic residues predominate over residues 105-117 (SEEEEEEEEEEDG). The segment at 152–177 (RHSLPGHRAKDSKSPRRRTFPGVATR) is interaction with MYC. The Nuclear localization signal signature appears at 167–183 (RRRTFPGVATRRNPERR). Threonine 170 bears the Phosphothreonine mark. Serine 197 is subject to Phosphoserine. Position 203 is a phosphothreonine (threonine 203). Positions 203-215 (TEEEEEEEEEEED) are enriched in acidic residues. Residue lysine 216 forms a Glycyl lysine isopeptide (Lys-Gly) (interchain with G-Cter in SUMO2) linkage. Residue serine 225 is modified to Phosphoserine. The tract at residues 258-382 (EEEIRNICSN…SLKQEFEMQA (125 aa)) is mediates transcriptional activity.

In terms of assembly, interacts with MYC (via C-terminus), YWHAE and YWHAZ. Post-translationally, phosphorylation at Thr-170 promotes interaction with YWHAE and YWHAZ, dissociation from MYC and sequestration in the cytoplasm.

It is found in the nucleus. The protein resides in the cytoplasm. Participates in MYC-mediated cell transformation and apoptosis; induces anchorage-independent growth and clonogenicity in lymphoblastoid cells. Insufficient to induce tumorigenicity when overexpressed but contributes to MYC-mediated tumorigenesis. May play a role as transcriptional regulator. The polypeptide is Cell division cycle-associated protein 7 (Cdca7) (Mus musculus (Mouse)).